The following is a 124-amino-acid chain: Flagellar transcriptional regulator FlhD (124 aa).

The protein belongs to the FlhD family. Homodimer; disulfide-linked. Forms a heterohexamer composed of two FlhC and four FlhD subunits. Each FlhC binds a FlhD dimer, forming a heterotrimer, and a hexamer assembles by dimerization of two heterotrimers.

The protein localises to the cytoplasm. Functions in complex with FlhC as a master transcriptional regulator that regulates transcription of several flagellar and non-flagellar operons by binding to their promoter region. Activates expression of class 2 flagellar genes, including fliA, which is a flagellum-specific sigma factor that turns on the class 3 genes. Also regulates genes whose products function in a variety of physiological pathways. This is Flagellar transcriptional regulator FlhD from Pectobacterium carotovorum (Erwinia carotovora).